The sequence spans 312 residues: Pantothenate kinase (312 aa).

97 to 104 (GSVAVGKS) provides a ligand contact to ATP.

It belongs to the prokaryotic pantothenate kinase family.

The protein resides in the cytoplasm. The enzyme catalyses (R)-pantothenate + ATP = (R)-4'-phosphopantothenate + ADP + H(+). It functions in the pathway cofactor biosynthesis; coenzyme A biosynthesis; CoA from (R)-pantothenate: step 1/5. This Mycolicibacterium gilvum (strain PYR-GCK) (Mycobacterium gilvum (strain PYR-GCK)) protein is Pantothenate kinase.